We begin with the raw amino-acid sequence, 1002 residues long: Mannan endo-1,4-beta-mannosidase (1002 aa).

The N-terminal stretch at 1 to 28 is a signal peptide; the sequence is MKTTVTKLLATVAAASTIFGMSTLPAFA. A GH26 domain is found at 49–396; the sequence is AETRALFDKL…ADSNKNLMAS (348 aa). Histidine 144 lines the substrate pocket. Residue glutamate 205 is the Proton donor of the active site. The substrate site is built by tryptophan 210 and tyrosine 278. Glutamate 316 serves as the catalytic Nucleophile. Lysine 384 is a binding site for substrate. CBM11 domains are found at residues 523 to 703 and 717 to 897; these read VDNV…GKRD and AKAQ…NEQT. Disordered regions lie at residues 702-722 and 888-969; these read RDAY…AQSV and PAEN…LSRT. A compositionally biased stretch (polar residues) spans 707-719; sequence PNTNPTPGNTAKA. Basic and acidic residues-rich tracts occupy residues 897–913 and 952–966; these read TPKD…KEQE and PDTK…KDGL. The LPXTG sorting signal motif lies at 966-970; the sequence is LSRTG. Threonine 969 carries the pentaglycyl murein peptidoglycan amidated threonine modification. Residues 970 to 1002 constitute a propeptide, removed by sortase; sequence GSNIISAIAAVAVLLLGGCAVLIARKRKGGDIE.

It belongs to the glycosyl hydrolase 26 family. As to quaternary structure, homodimer.

The protein localises to the secreted. The protein resides in the cell wall. It catalyses the reaction Random hydrolysis of (1-&gt;4)-beta-D-mannosidic linkages in mannans, galactomannans and glucomannans.. Beta-mannanase likely involved in the utilization of carbohydrates in the human gut. Catalyzes the hydrolysis of different beta-1,4-linked mannans, such as ivory nut mannan, konjac glucomannan, as well as carob and guar gum galactomannans, to a mixture of oligosaccharides. The dominant product from ivory nut mannan is found to be mannotriose; mannobiose and mannotetraose are produced to a lesser extent. Does not hydrolyze mannobiose, and hydrolyzes mannotriose at a significantly lower rate than the longer oligosaccharides. In Bifidobacterium adolescentis (strain ATCC 15703 / DSM 20083 / NCTC 11814 / E194a), this protein is Mannan endo-1,4-beta-mannosidase.